The primary structure comprises 239 residues: RNA-binding protein 38 (239 aa).

Residues 34–111 (TKIFVGGLPY…RKANVNLAYL (78 aa)) form the RRM domain.

Belongs to the RBM38 family.

The protein resides in the cytoplasm. It localises to the cytosol. Its subcellular location is the nucleus. Functionally, RNA-binding protein that specifically bind the 3'-UTR of CDKN1A transcripts, leading to maintain the stability of CDKN1A transcripts, thereby acting as a mediator of the p53/TP53 family to regulate CDKN1A. CDKN1A is a cyclin-dependent kinase inhibitor transcriptionally regulated by the p53/TP53 family to induce cell cycle arrest. Isoform 1, but not isoform 2, has the ability to induce cell cycle arrest in G1 and maintain the stability of CDKN1A transcripts induced by p53/TP53. Also acts as a mRNA splicing factor. Specifically regulates the expression of FGFR2-IIIb, an epithelial cell-specific isoform of FGFR2. Plays a role in myogenic differentiation. (Microbial infection) Essential factor for the splicing of the pre-mRNAs of human parvovirus B19 (B19V) and for the expression of B19V 11-kDa protein, which enhances viral replication. This Homo sapiens (Human) protein is RNA-binding protein 38 (RBM38).